The following is a 156-amino-acid chain: ATP synthase subunit b (156 aa).

A helical membrane pass occupies residues 4–26; sequence GATFWGPMISFALFVWFTMKFVW.

This sequence belongs to the ATPase B chain family. F-type ATPases have 2 components, F(1) - the catalytic core - and F(0) - the membrane proton channel. F(1) has five subunits: alpha(3), beta(3), gamma(1), delta(1), epsilon(1). F(0) has three main subunits: a(1), b(2) and c(10-14). The alpha and beta chains form an alternating ring which encloses part of the gamma chain. F(1) is attached to F(0) by a central stalk formed by the gamma and epsilon chains, while a peripheral stalk is formed by the delta and b chains.

Its subcellular location is the cell inner membrane. Its function is as follows. F(1)F(0) ATP synthase produces ATP from ADP in the presence of a proton or sodium gradient. F-type ATPases consist of two structural domains, F(1) containing the extramembraneous catalytic core and F(0) containing the membrane proton channel, linked together by a central stalk and a peripheral stalk. During catalysis, ATP synthesis in the catalytic domain of F(1) is coupled via a rotary mechanism of the central stalk subunits to proton translocation. Functionally, component of the F(0) channel, it forms part of the peripheral stalk, linking F(1) to F(0). The polypeptide is ATP synthase subunit b (Halorhodospira halophila (strain DSM 244 / SL1) (Ectothiorhodospira halophila (strain DSM 244 / SL1))).